The following is a 279-amino-acid chain: Thymidylate synthase 1 (279 aa).

Position 141–142 (141–142 (RR)) interacts with dUMP. Residue Cys-161 is the Nucleophile of the active site. DUMP-binding positions include 181–184 (RSND), Asn-192, and 222–224 (HVY). A (6R)-5,10-methylene-5,6,7,8-tetrahydrofolate-binding site is contributed by Asp-184. Ala-278 contacts (6R)-5,10-methylene-5,6,7,8-tetrahydrofolate.

Belongs to the thymidylate synthase family. Bacterial-type ThyA subfamily. Homodimer.

The protein localises to the cytoplasm. It catalyses the reaction dUMP + (6R)-5,10-methylene-5,6,7,8-tetrahydrofolate = 7,8-dihydrofolate + dTMP. It participates in pyrimidine metabolism; dTTP biosynthesis. Its function is as follows. Catalyzes the reductive methylation of 2'-deoxyuridine-5'-monophosphate (dUMP) to 2'-deoxythymidine-5'-monophosphate (dTMP) while utilizing 5,10-methylenetetrahydrofolate (mTHF) as the methyl donor and reductant in the reaction, yielding dihydrofolate (DHF) as a by-product. This enzymatic reaction provides an intracellular de novo source of dTMP, an essential precursor for DNA biosynthesis. The protein is Thymidylate synthase 1 of Bacillus subtilis (strain 168).